A 1043-amino-acid chain; its full sequence is Ras guanine nucleotide exchange factor S (1043 aa).

Positions isoleucine 109–leucine 142 form a coiled coil. Low complexity-rich tracts occupy residues glutamine 135–isoleucine 145, leucine 245–serine 258, serine 266–serine 281, and asparagine 293–serine 307. 2 disordered regions span residues glutamine 135–isoleucine 160 and leucine 245–glutamine 316. Residues leucine 404–glutamate 434 adopt a coiled-coil conformation. One can recognise an N-terminal Ras-GEF domain in the interval lysine 645–isoleucine 768. Residues serine 803 to lysine 1043 enclose the Ras-GEF domain.

Its function is as follows. Promotes the exchange of Ras-bound GDP by GTP. The sequence is that of Ras guanine nucleotide exchange factor S (gefS) from Dictyostelium discoideum (Social amoeba).